The primary structure comprises 249 residues: DNA repair protein RecO (249 aa).

This sequence belongs to the RecO family.

Involved in DNA repair and RecF pathway recombination. In Afipia carboxidovorans (strain ATCC 49405 / DSM 1227 / KCTC 32145 / OM5) (Oligotropha carboxidovorans), this protein is DNA repair protein RecO.